The chain runs to 108 residues: Peptidyl-prolyl cis-trans isomerase FKBP1A (108 aa).

Residue serine 10 is modified to Phosphoserine. Residues 20 to 108 (GQTCVVHYTG…VFDVELLKLE (89 aa)) form the PPIase FKBP-type domain. Lysine 53 is modified (N6-acetyllysine; alternate). Lysine 53 carries the post-translational modification N6-succinyllysine; alternate.

Belongs to the FKBP-type PPIase family. FKBP1 subfamily. In terms of assembly, interacts with TGFBR1; prevents TGFBR1 phosphorylation by TGFBR2 and stabilizes it in the inactive conformation. Interacts with ACVR1B and SMAD7. Identified in a complex composed of RYR1, PDE4D, PKA, FKBP1A and protein phosphatase 1 (PP1). Interacts directly with RYR2. Interacts directly with RYR3. Interacts directly with RYR1. Interacts with GLMN; rapamycin and FK506 abolish the interaction with GLMN in a dose dependent manner. As to expression, ubiquitous.

The protein resides in the cytoplasm. It localises to the cytosol. Its subcellular location is the sarcoplasmic reticulum membrane. The enzyme catalyses [protein]-peptidylproline (omega=180) = [protein]-peptidylproline (omega=0). With respect to regulation, inhibited by both FK506 and rapamycin. Functionally, keeps in an inactive conformation TGFBR1, the TGF-beta type I serine/threonine kinase receptor, preventing TGF-beta receptor activation in absence of ligand. Recruits SMAD7 to ACVR1B which prevents the association of SMAD2 and SMAD3 with the activin receptor complex, thereby blocking the activin signal. May modulate the RYR1 calcium channel activity. PPIases accelerate the folding of proteins. It catalyzes the cis-trans isomerization of proline imidic peptide bonds in oligopeptides. In Rattus norvegicus (Rat), this protein is Peptidyl-prolyl cis-trans isomerase FKBP1A (Fkbp1a).